The following is a 516-amino-acid chain: Adenosine deaminase (516 aa).

Positions Met1–Asp20 are cleaved as a signal peptide.

It belongs to the metallo-dependent hydrolases superfamily. Adenosine and AMP deaminases family. ADGF subfamily. Zn(2+) is required as a cofactor. In terms of tissue distribution, salivary gland (at protein level).

It is found in the secreted. The catalysed reaction is adenosine + H2O + H(+) = inosine + NH4(+). Functionally, catalyzes the deamination of adenosine to inosine. The protein is Adenosine deaminase of Phlebotomus duboscqi (Sandfly).